A 126-amino-acid polypeptide reads, in one-letter code: Large ribosomal subunit protein bL19 (126 aa).

It belongs to the bacterial ribosomal protein bL19 family.

In terms of biological role, this protein is located at the 30S-50S ribosomal subunit interface and may play a role in the structure and function of the aminoacyl-tRNA binding site. The protein is Large ribosomal subunit protein bL19 of Thiobacillus denitrificans (strain ATCC 25259 / T1).